Consider the following 225-residue polypeptide: Ethylene-responsive transcription factor 3 (225 aa).

Over residues 1-12 (MRRGRAAAAPAP) the composition is skewed to low complexity. Disordered stretches follow at residues 1–29 (MRRGRAAAAPAPVTGEPNGSGGSKEIRFR) and 82–193 (NFPL…NIAS). A DNA-binding region (AP2/ERF) is located at residues 27 to 84 (RFRGVRKRPWGRFAAEIRDPWKKTRVWLGTFDSAEDAARAYDAAARALRGPKAKTNFP). A compositionally biased stretch (low complexity) spans 118-134 (SQRPTSSSMSSTVESFS). Over residues 176-185 (DHGDCEKEND) the composition is skewed to basic and acidic residues. Positions 202–208 (FDLNLPP) match the EAR-like (transcriptional repression) motif.

The protein belongs to the ethylene-response factor family. Class 2 subfamily.

It localises to the nucleus. In terms of biological role, transcription factor that binds to the GCC-box pathogenesis-related promoter element. Involved in the regulation of gene expression by stress factors and by components of stress signal transduction pathways. Probably acts as a transcriptional repressor and may regulate other AtERFs. This is Ethylene-responsive transcription factor 3 (ERF3) from Nicotiana tabacum (Common tobacco).